The chain runs to 70 residues: Small ribosomal subunit protein bS21 (70 aa).

It belongs to the bacterial ribosomal protein bS21 family.

This is Small ribosomal subunit protein bS21 from Sulfurovum sp. (strain NBC37-1).